Consider the following 51-residue polypeptide: Large ribosomal subunit protein eL39 (51 aa).

The span at 1–15 shows a compositional bias: basic residues; that stretch reads MAAKKSFKIKQKLAK. Residues 1 to 21 are disordered; the sequence is MAAKKSFKIKQKLAKAKNQNR.

This sequence belongs to the eukaryotic ribosomal protein eL39 family. Interacts with YIH1.

The chain is Large ribosomal subunit protein eL39 (RPL39) from Eremothecium gossypii (strain ATCC 10895 / CBS 109.51 / FGSC 9923 / NRRL Y-1056) (Yeast).